A 461-amino-acid polypeptide reads, in one-letter code: Kynureninase (461 aa).

Pyridoxal 5'-phosphate-binding positions include Leu114, Thr115, 142-145 (FPSD), Asp228, His231, and Tyr253. Position 254 is an N6-(pyridoxal phosphate)lysine (Lys254). The pyridoxal 5'-phosphate site is built by Trp288 and Asn316.

This sequence belongs to the kynureninase family. As to quaternary structure, homodimer. Pyridoxal 5'-phosphate is required as a cofactor.

It localises to the cytoplasm. It carries out the reaction L-kynurenine + H2O = anthranilate + L-alanine + H(+). It catalyses the reaction 3-hydroxy-L-kynurenine + H2O = 3-hydroxyanthranilate + L-alanine + H(+). The protein operates within amino-acid degradation; L-kynurenine degradation; L-alanine and anthranilate from L-kynurenine: step 1/1. It participates in cofactor biosynthesis; NAD(+) biosynthesis; quinolinate from L-kynurenine: step 2/3. Functionally, catalyzes the cleavage of L-kynurenine (L-Kyn) and L-3-hydroxykynurenine (L-3OHKyn) into anthranilic acid (AA) and 3-hydroxyanthranilic acid (3-OHAA), respectively. The protein is Kynureninase of Candida albicans (strain SC5314 / ATCC MYA-2876) (Yeast).